Here is a 365-residue protein sequence, read N- to C-terminus: A-type ATP synthase subunit C (365 aa).

Belongs to the V-ATPase V0D/AC39 subunit family. In terms of assembly, has multiple subunits with at least A(3), B(3), C, D, E, F, H, I and proteolipid K(x).

The protein resides in the cell membrane. Functionally, component of the A-type ATP synthase that produces ATP from ADP in the presence of a proton gradient across the membrane. The protein is A-type ATP synthase subunit C of Thermococcus kodakarensis (strain ATCC BAA-918 / JCM 12380 / KOD1) (Pyrococcus kodakaraensis (strain KOD1)).